A 92-amino-acid polypeptide reads, in one-letter code: Beta-2-microglobulin (92 aa).

An Ig-like C1-type domain is found at 2–91 (PQIQVYTRHP…VSLNEPKTVI (90 aa)). Cysteines 22 and 77 form a disulfide.

Belongs to the beta-2-microglobulin family. As to quaternary structure, heterodimer of an alpha chain and a beta chain. Beta-2-microglobulin is the beta-chain of major histocompatibility complex class I molecules.

The protein localises to the secreted. Its function is as follows. Component of the class I major histocompatibility complex (MHC). Involved in the presentation of peptide antigens to the immune system. This Mus cervicolor (Fawn-colored mouse) protein is Beta-2-microglobulin (B2m).